Reading from the N-terminus, the 566-residue chain is DDB1- and CUL4-associated factor 10 (566 aa).

Disordered regions lie at residues 1–72 and 87–123; these read MFPF…AERA and TASASQAKLSPSSSPRRRSRPDWRAGGRSRQGLGAGL. Phosphoserine is present on residues S50, S57, S67, S96, S99, and S100. The span at 87–100 shows a compositional bias: low complexity; sequence TASASQAKLSPSSS. Residue R141 is modified to Omega-N-methylarginine. WD repeat units follow at residues 173–212, 216–254, 258–297, and 303–342; these read RTHGAVFNLEYSPDGSVLTVACEQTEVLLFDPISSKHIKT, AHEDCVNNIRFLDNRLFATCSDDTTIALWDLRKLNTKVC, GHTSWVKNIEYDTNTRLLVTSGFDGNVIIWDTNRCTEDGC, and FHTRFLMRMRLTPDCSKMLISTSSGYLLILHELDLTKSLE. Residues 354–374 are compositionally biased toward low complexity; sequence TTSSSDLTTTSSSSGSRVSGS. Positions 354–413 are disordered; the sequence is TTSSSDLTTTSSSSGSRVSGSPCHHNDSNSTEKHMSRASQREGVSPRNSLEVLTPEVPGE. The residue at position 356 (S356) is a Phosphoserine. Basic and acidic residues predominate over residues 377-388; sequence HHNDSNSTEKHM. WD repeat units lie at residues 415–455, 477–515, and 533–566; these read DRGN…QEGA, VGRGYIKELCFSPDGRMISSPHGYGIRLLGFDKQCSELV, and SHNDVVLTTKFSPTHCQIASGCLSGRVSLYQPKF.

Belongs to the WD repeat DCAF10 family. As to quaternary structure, interacts with DDB1.

The protein operates within protein modification; protein ubiquitination. Functionally, may function as a substrate receptor for CUL4-DDB1 E3 ubiquitin-protein ligase complex. The protein is DDB1- and CUL4-associated factor 10 (Dcaf10) of Mus musculus (Mouse).